A 98-amino-acid chain; its full sequence is C-X-C motif chemokine 10 (98 aa).

Positions Met1–Gly21 are cleaved as a signal peptide. The residue at position 26 (Arg26) is a Citrulline. Disulfide bonds link Cys30–Cys57 and Cys32–Cys74.

The protein belongs to the intercrine alpha (chemokine CxC) family. As to quaternary structure, monomer, dimer, and tetramer. Interacts with CXCR3 (via N-terminus).

It localises to the secreted. Pro-inflammatory cytokine that is involved in a wide variety of processes such as chemotaxis, differentiation, and activation of peripheral immune cells, regulation of cell growth, apoptosis and modulation of angiostatic effects. Plays thereby an important role during viral infections by stimulating the activation and migration of immune cells to the infected sites. Mechanistically, binding of CXCL10 to the CXCR3 receptor activates G protein-mediated signaling and results in downstream activation of phospholipase C-dependent pathway, an increase in intracellular calcium production and actin reorganization. In turn, recruitment of activated Th1 lymphocytes occurs at sites of inflammation. Activation of the CXCL10/CXCR3 axis also plays an important role in neurons in response to brain injury for activating microglia, the resident macrophage population of the central nervous system, and directing them to the lesion site. This recruitment is an essential element for neuronal reorganization. This chain is C-X-C motif chemokine 10 (CXCL10), found in Canis lupus familiaris (Dog).